The following is a 160-amino-acid chain: Heme transporter hrg-5 (160 aa).

The chain crosses the membrane as a helical span at residues 21–41; that stretch reads IALTILDILIGFSNILSYAIQ. A glycan (N-linked (GlcNAc...) asparagine) is linked at Asn44. Helical transmembrane passes span 47–67, 89–109, and 123–142; these read ALTLTAMVTLVACHTLQMFLA, ITLGFLALGCFVVCFIIAGVT, and FTGLWATAITKYTWQNALLA. Residue Asn144 is glycosylated (N-linked (GlcNAc...) asparagine).

It belongs to the HRG family.

The protein resides in the membrane. Heme transporter. The chain is Heme transporter hrg-5 (hrg-5) from Caenorhabditis elegans.